The sequence spans 332 residues: Phosphate acyltransferase (332 aa).

Belongs to the PlsX family. Homodimer. Probably interacts with PlsY.

The protein localises to the cytoplasm. The catalysed reaction is a fatty acyl-[ACP] + phosphate = an acyl phosphate + holo-[ACP]. Its pathway is lipid metabolism; phospholipid metabolism. In terms of biological role, catalyzes the reversible formation of acyl-phosphate (acyl-PO(4)) from acyl-[acyl-carrier-protein] (acyl-ACP). This enzyme utilizes acyl-ACP as fatty acyl donor, but not acyl-CoA. The chain is Phosphate acyltransferase from Sulfurimonas denitrificans (strain ATCC 33889 / DSM 1251) (Thiomicrospira denitrificans (strain ATCC 33889 / DSM 1251)).